Consider the following 344-residue polypeptide: MNRLTLALDVMGGDFGPRITIPALSLALEKNPMLSFVLFGDQSQCSPLLNSLPVTQQQRITFVHTSRIIEADIPFTQALRQSKGSSMRLALEAVARGEAQGCVSGGNTGALVGLAKLLIKPLPNIERPALTTLIPSMNGKSSVMLDLGANVEADSQLLCQFAEMGNIFAEVMLDLVHPRLALLNIGTEENKGNQIIRDTHQLLKQRYDLNYIGFIESDKLMNHFADVIICDGFSGNIALKALEGAAKNILSLLKKPTPDSHLCQTAKRYLLRAIFYRYYRKLQQINPDRHNGATLLGLSSVVVKSHGGAGVNAYFYAIDHAIGQIRSGIPDKISQGLNRLHQNL.

The protein belongs to the PlsX family. As to quaternary structure, homodimer. Probably interacts with PlsY.

The protein localises to the cytoplasm. The enzyme catalyses a fatty acyl-[ACP] + phosphate = an acyl phosphate + holo-[ACP]. It functions in the pathway lipid metabolism; phospholipid metabolism. Its function is as follows. Catalyzes the reversible formation of acyl-phosphate (acyl-PO(4)) from acyl-[acyl-carrier-protein] (acyl-ACP). This enzyme utilizes acyl-ACP as fatty acyl donor, but not acyl-CoA. This Actinobacillus pleuropneumoniae serotype 5b (strain L20) protein is Phosphate acyltransferase.